A 431-amino-acid polypeptide reads, in one-letter code: Pachytene checkpoint protein 2 homolog (431 aa).

M1 bears the N-acetylmethionine mark. An ATP-binding site is contributed by 179–186 (GPPGTGKT).

The protein belongs to the AAA ATPase family. PCH2 subfamily. As to quaternary structure, specifically interacts with the ligand binding domain of the thyroid receptor (TR). This interaction does not require the presence of thyroid hormone for its interaction. Interacts with proteasome subunit PSMA8; to participate in meiosis progression during spermatogenesis.

In terms of biological role, plays a key role in chromosome recombination and chromosome structure development during meiosis. Required at early steps in meiotic recombination that leads to non-crossovers pathways. Also needed for efficient completion of homologous synapsis by influencing crossover distribution along the chromosomes affecting both crossovers and non-crossovers pathways. Also required for development of higher-order chromosome structures and is needed for synaptonemal-complex formation. In males, required for efficient synapsis of the sex chromosomes and for sex body formation. Promotes early steps of the DNA double-strand breaks (DSBs) repair process upstream of the assembly of RAD51 complexes. Required for depletion of HORMAD1 and HORMAD2 from synapsed chromosomes. Plays a role in mitotic spindle assembly checkpoint (SAC) activation. This Sus scrofa (Pig) protein is Pachytene checkpoint protein 2 homolog (TRIP13).